The sequence spans 513 residues: Bifunctional purine biosynthesis protein PurH (513 aa).

The region spanning M1–T147 is the MGS-like domain.

This sequence belongs to the PurH family.

It catalyses the reaction (6R)-10-formyltetrahydrofolate + 5-amino-1-(5-phospho-beta-D-ribosyl)imidazole-4-carboxamide = 5-formamido-1-(5-phospho-D-ribosyl)imidazole-4-carboxamide + (6S)-5,6,7,8-tetrahydrofolate. The catalysed reaction is IMP + H2O = 5-formamido-1-(5-phospho-D-ribosyl)imidazole-4-carboxamide. It functions in the pathway purine metabolism; IMP biosynthesis via de novo pathway; 5-formamido-1-(5-phospho-D-ribosyl)imidazole-4-carboxamide from 5-amino-1-(5-phospho-D-ribosyl)imidazole-4-carboxamide (10-formyl THF route): step 1/1. The protein operates within purine metabolism; IMP biosynthesis via de novo pathway; IMP from 5-formamido-1-(5-phospho-D-ribosyl)imidazole-4-carboxamide: step 1/1. The protein is Bifunctional purine biosynthesis protein PurH of Leptospira biflexa serovar Patoc (strain Patoc 1 / Ames).